A 352-amino-acid polypeptide reads, in one-letter code: MDSNASLPLNVSGGTQATPAGLVVLDVFSYLILVVTFVLGVLGNGLVIWVTGFRMTHTVTTISYLNLALADFSFTSTLPFFIVTKALGGHWPFGWFLCKFVFTIVDINLFGSVFLIALIALDRCICVLHPVWAQNHRNVSLAKKVIVGPWICALLLTLPVIIRVTTLSHPRAPGKMACTFDWSPWTEDPAEKLKVAISMFMVRGIIRFIIGFSTPMSIVAVCYGLIATKIHRQGLIKSSRPLRVLSFVVASFLLCWSPYQIAALIATVRIRELLLGMGKDLRIVLDVTSFVAFFNSCLNPMLYVFMGQDFRERLIHSLPASLERALSEDSAQTSDTGTNSTSAPAEAELQAI.

Topologically, residues 1 to 27 are extracellular; that stretch reads MDSNASLPLNVSGGTQATPAGLVVLDV. N-linked (GlcNAc...) asparagine glycans are attached at residues Asn4 and Asn10. A helical transmembrane segment spans residues 28–50; that stretch reads FSYLILVVTFVLGVLGNGLVIWV. Residues 51-61 lie on the Cytoplasmic side of the membrane; sequence TGFRMTHTVTT. The helical transmembrane segment at 62 to 83 threads the bilayer; it reads ISYLNLALADFSFTSTLPFFIV. The Extracellular segment spans residues 84 to 100; the sequence is TKALGGHWPFGWFLCKF. Cys98 and Cys178 are disulfide-bonded. Residues 101–121 form a helical membrane-spanning segment; the sequence is VFTIVDINLFGSVFLIALIAL. Over 122-140 the chain is Cytoplasmic; that stretch reads DRCICVLHPVWAQNHRNVS. The chain crosses the membrane as a helical span at residues 141 to 162; that stretch reads LAKKVIVGPWICALLLTLPVII. Residues 163 to 207 lie on the Extracellular side of the membrane; the sequence is RVTTLSHPRAPGKMACTFDWSPWTEDPAEKLKVAISMFMVRGIIR. Residues 208 to 228 traverse the membrane as a helical segment; sequence FIIGFSTPMSIVAVCYGLIAT. The Cytoplasmic portion of the chain corresponds to 229 to 244; sequence KIHRQGLIKSSRPLRV. Residues 245–268 traverse the membrane as a helical segment; sequence LSFVVASFLLCWSPYQIAALIATV. Residues 269–287 are Extracellular-facing; sequence RIRELLLGMGKDLRIVLDV. Residues 288–307 traverse the membrane as a helical segment; the sequence is TSFVAFFNSCLNPMLYVFMG. At 308–352 the chain is on the cytoplasmic side; sequence QDFRERLIHSLPASLERALSEDSAQTSDTGTNSTSAPAEAELQAI.

Belongs to the G-protein coupled receptor 1 family. In terms of processing, phosphorylated; which is necessary for desensitization. In terms of tissue distribution, neutrophils.

The protein localises to the cell membrane. In terms of biological role, high affinity receptor for N-formyl-methionyl peptides (fMLP), which are powerful neutrophil chemotactic factors. Binding of fMLP to the receptor stimulates intracellular calcium mobilization and superoxide anion release. This response is mediated via a G-protein that activates a phosphatidylinositol-calcium second messenger system. Receptor for TAFA4, mediates its effects on chemoattracting macrophages, promoting phagocytosis and increasing ROS release. Receptor for cathepsin CTSG, leading to increased phagocyte chemotaxis. In Oryctolagus cuniculus (Rabbit), this protein is fMet-Leu-Phe receptor (FPR1).